We begin with the raw amino-acid sequence, 504 residues long: MEKLQGHRELDRSWQHNFFYPLIFQEYIYVFAYDHALNKLILLENAIDKKYSLLIVKRLITRMYQQNHFILSVNDSNQNEIFGHKHKKNLYSQMITEGFAVIVEIPFSLLLISSLEGKEIVESQNLRSIHSIFPFLEDKFLHLNYVLDILIPYPAHLEILVQTLRYWLKDASSLHLLRYFLYEYRNWNSLIRPKESISPFSKRNRRFFLFLYNLLVYEYESIFVILRKQSSYLRSTSFGALLERIHFYGKIKYLVKVKVKVFGVILWLFKEPFLHYVRYQGKCLLASKGTSFLMYKWKYYFIAFWQCHFSVWSQPRRIYINQLSNYSLDFMGFISNVGLNSSVIRSQMLENSFLVDNIIKKFDTIVPIIPLVGSLAKAKFCNGLRHPISKSGWTDLSDADIIDRFGRICRNLSHYYSGSSRKKSLYRIKYILRLSCARTLSRKHKSTVRAFLKRLGSEFLEEFFTEEDKVLSLILPRDSSSSGFYRGRVWYLDIICIHNLANDE.

It belongs to the intron maturase 2 family. MatK subfamily.

It is found in the plastid. The protein localises to the chloroplast. In terms of biological role, usually encoded in the trnK tRNA gene intron. Probably assists in splicing its own and other chloroplast group II introns. The sequence is that of Maturase K from Amaranthus caudatus (Love-lies-bleeding).